We begin with the raw amino-acid sequence, 167 residues long: UPF0114 protein in repA1-repA2 intergenic region (167 aa).

A run of 3 helical transmembrane segments spans residues 15 to 35 (LMFP…LKFF), 53 to 73 (LVLA…LVMV), and 136 to 156 (IMLC…MAYI).

This sequence belongs to the UPF0114 family.

It is found in the cell membrane. This is UPF0114 protein in repA1-repA2 intergenic region from Buchnera aphidicola subsp. Schizaphis graminum (strain Sg).